A 170-amino-acid chain; its full sequence is ATP synthase subunit b (170 aa).

Residues 15-37 (FNLFETNILNWAVVVFGLYKFLP) traverse the membrane as a helical segment.

Belongs to the ATPase B chain family. As to quaternary structure, F-type ATPases have 2 components, F(1) - the catalytic core - and F(0) - the membrane proton channel. F(1) has five subunits: alpha(3), beta(3), gamma(1), delta(1), epsilon(1). F(0) has four main subunits: a(1), b(1), b'(1) and c(10-14). The alpha and beta chains form an alternating ring which encloses part of the gamma chain. F(1) is attached to F(0) by a central stalk formed by the gamma and epsilon chains, while a peripheral stalk is formed by the delta, b and b' chains.

It localises to the cellular thylakoid membrane. Functionally, f(1)F(0) ATP synthase produces ATP from ADP in the presence of a proton or sodium gradient. F-type ATPases consist of two structural domains, F(1) containing the extramembraneous catalytic core and F(0) containing the membrane proton channel, linked together by a central stalk and a peripheral stalk. During catalysis, ATP synthesis in the catalytic domain of F(1) is coupled via a rotary mechanism of the central stalk subunits to proton translocation. In terms of biological role, component of the F(0) channel, it forms part of the peripheral stalk, linking F(1) to F(0). The protein is ATP synthase subunit b of Prochlorococcus marinus (strain MIT 9312).